We begin with the raw amino-acid sequence, 872 residues long: Bifunctional heparan sulfate N-deacetylase/N-sulfotransferase 4 (872 aa).

Over 1-13 (MNLILKFRRSFRT) the chain is Cytoplasmic. The chain crosses the membrane as a helical; Signal-anchor for type II membrane protein span at residues 14–34 (LIVLLATFCLVSILISAYFLY). Topologically, residues 35–872 (SGYKQEMTLI…WLRQELQKVR (838 aa)) are lumenal. The heparan sulfate N-deacetylase 4 stretch occupies residues 36 to 588 (GYKQEMTLIE…KRHKDIWSRE (553 aa)). N-linked (GlcNAc...) asparagine glycosylation is found at N226, N341, and N391. A heparan sulfate N-sulfotransferase 4 region spans residues 589–872 (KTCDHLPKFL…WLRQELQKVR (284 aa)). K604 acts as the For sulfotransferase activity in catalysis. 604-608 (KTGTT) lines the 3'-phosphoadenylyl sulfate pocket. N657 carries an N-linked (GlcNAc...) asparagine glycan. Residue S702 coordinates 3'-phosphoadenylyl sulfate. N-linked (GlcNAc...) asparagine glycosylation occurs at N793. Residues C808 and C818 are joined by a disulfide bond. 823–827 (KGRKY) provides a ligand contact to 3'-phosphoadenylyl sulfate.

The protein belongs to the sulfotransferase 1 family. NDST subfamily. As to quaternary structure, monomer. Expressed at low level in brain and throughout embryogenesis. Not expressed in other tissues.

It is found in the golgi apparatus membrane. It carries out the reaction alpha-D-glucosaminyl-[heparan sulfate](n) + 3'-phosphoadenylyl sulfate = N-sulfo-alpha-D-glucosaminyl-[heparan sulfate](n) + adenosine 3',5'-bisphosphate + 2 H(+). Its pathway is glycan metabolism; heparan sulfate biosynthesis. It functions in the pathway glycan metabolism; heparin biosynthesis. Functionally, essential bifunctional enzyme that catalyzes both the N-deacetylation and the N-sulfation of glucosamine (GlcNAc) of the glycosaminoglycan in heparan sulfate. Modifies the GlcNAc-GlcA disaccharide repeating sugar backbone to make N-sulfated heparosan, a prerequisite substrate for later modifications in heparin biosynthesis. Has low deacetylase activity but high sulfotransferase activity. In Mus musculus (Mouse), this protein is Bifunctional heparan sulfate N-deacetylase/N-sulfotransferase 4 (Ndst4).